Consider the following 309-residue polypeptide: tRNA dimethylallyltransferase (309 aa).

ATP is bound at residue 14 to 21 (GPTASGKS). 16 to 21 (TASGKS) lines the substrate pocket. The interaction with substrate tRNA stretch occupies residues 39–42 (DSMQ).

Belongs to the IPP transferase family. As to quaternary structure, monomer. Requires Mg(2+) as cofactor.

It carries out the reaction adenosine(37) in tRNA + dimethylallyl diphosphate = N(6)-dimethylallyladenosine(37) in tRNA + diphosphate. Functionally, catalyzes the transfer of a dimethylallyl group onto the adenine at position 37 in tRNAs that read codons beginning with uridine, leading to the formation of N6-(dimethylallyl)adenosine (i(6)A). The sequence is that of tRNA dimethylallyltransferase from Geobacter metallireducens (strain ATCC 53774 / DSM 7210 / GS-15).